The chain runs to 333 residues: HTH-type transcriptional regulator pepR1 (333 aa).

The region spanning 6 to 60 (VTIYDVAREAKVSMATVSRVVNGNNNVRKETRDRVMEVIKRLHYQPNAVAQGLAS) is the HTH lacI-type domain. The segment at residues 8–27 (IYDVAREAKVSMATVSRVVN) is a DNA-binding region (H-T-H motif).

Transcriptional regulator of the pepQ gene for prolidase. The protein is HTH-type transcriptional regulator pepR1 (pepR1) of Lactobacillus delbrueckii subsp. lactis.